The chain runs to 406 residues: Zinc metalloprotease Rip1 (406 aa).

A helical transmembrane segment spans residues 1–21 (MMFGIGIVLFALAILVSVALH). His-21 provides a ligand contact to Zn(2+). The active site involves Glu-22. Zn(2+) is bound at residue His-25. Residues 108–128 (PAMNFVIGLVLIYGIAIVWGL) traverse the membrane as a helical segment. The region spanning 125–209 (VWGLPNLHQP…RIEFKRDGRV (85 aa)) is the PDZ domain. Zn(2+) is bound at residue Asp-206. 2 helical membrane-spanning segments follow: residues 327 to 349 (NFVLGAINLVPLLPFDGGHIAVA) and 375 to 395 (LMPATYVVLAVVAGYMLLTVT).

The protein belongs to the peptidase M50B family. The cofactor is Zn(2+).

Its subcellular location is the cell membrane. With respect to regulation, proteolysis is inhibited by Wag31; when Wag31 is non-functional oxidative stress increases proteolysis. A probable intramembrane site-2 protease (S2P) that cleaves type-2 transmembrane proteins within their membrane-spanning domains. Degrades PbpB (PBP3, FtsI) under conditions of oxidatives stress; degradation is inhibited by Wag31-PbpB interaction. Also cleaves anti-sigma factors RskA, RslA and RslM. Site-1 proteases have not yet been identified in this organism. Functionally, regulated intramembrane proteolysis (RIP) occurs when an extracytoplasmic signal (possibly oxidative stress) triggers a concerted proteolytic cascade to transmit information and elicit cellular responses. The membrane-spanning regulatory substrate protein (includes anti-sigma factors RskA, RslA, RsmA, and PbpB) is first cut extracytoplasmically (site-1 protease, S1P), then within the membrane itself (site-2 protease, S2P, this entry), while cytoplasmic proteases finish degrading the regulatory protein, liberating the effector protein (ECF sigma factors SigK, SigL and SigM). The polypeptide is Zinc metalloprotease Rip1 (rip1) (Mycolicibacterium smegmatis (strain ATCC 700084 / mc(2)155) (Mycobacterium smegmatis)).